A 485-amino-acid chain; its full sequence is Glutamyl-tRNA(Gln) amidotransferase subunit A (485 aa).

Residues Lys-78 and Ser-153 each act as charge relay system in the active site. Ser-177 functions as the Acyl-ester intermediate in the catalytic mechanism.

Belongs to the amidase family. GatA subfamily. As to quaternary structure, heterotrimer of A, B and C subunits.

The enzyme catalyses L-glutamyl-tRNA(Gln) + L-glutamine + ATP + H2O = L-glutaminyl-tRNA(Gln) + L-glutamate + ADP + phosphate + H(+). In terms of biological role, allows the formation of correctly charged Gln-tRNA(Gln) through the transamidation of misacylated Glu-tRNA(Gln) in organisms which lack glutaminyl-tRNA synthetase. The reaction takes place in the presence of glutamine and ATP through an activated gamma-phospho-Glu-tRNA(Gln). The sequence is that of Glutamyl-tRNA(Gln) amidotransferase subunit A from Geobacter sp. (strain M21).